The primary structure comprises 85 residues: U4-theraphotoxin-Hhn1h (85 aa).

The N-terminal stretch at 1-22 is a signal peptide; sequence MKVTLIAILTCAAVLVLHTTAA. Residues 23 to 48 constitute a propeptide that is removed on maturation; the sequence is EELEAESQLMEVGMPDTELAAVDEER. Intrachain disulfides connect C52-C66, C56-C77, and C71-C82.

This sequence belongs to the neurotoxin 12 (Hwtx-2) family. 02 (Hwtx-2) subfamily. Expressed by the venom gland.

The protein resides in the secreted. Functionally, postsynaptic neurotoxin. This is U4-theraphotoxin-Hhn1h from Cyriopagopus hainanus (Chinese bird spider).